The primary structure comprises 395 residues: MAKEQFDRSLPHVNIGTIGHVDHGKTTLTAAITKVLSEQGNAEFKDYANIDNAPEERERGITINTAHVEYKTANRHYAHVDCPGHADYVKNMITGAAQMDGAILVVAATDGPMPQTREHILLSRQVGVPKIVVFLNKCDMVEDDEMIDLVEMEIRDLLTEYDFDGEGAPVIRGSALGALNGDSKWTGAINELMAAVDEYIPTPQRDADKTFLMPVEDVFTITGRGTVATGRVERGTVKVNEEVEIIGLKEEPTKTVVTGLEMFRKLLDFAVAGDNVGALLRGVDRHSVERGQVLAKPGTIKPHTVLKASVYALTQEEGGRHKPFFNKYRPQFYFRTTDVTGEVTLPEGTDMVMPGDNVEMEIQLIKPVAVEEGTKFSIREGGRTIGAGTVISIEK.

The 195-residue stretch at 10–204 (LPHVNIGTIG…AVDEYIPTPQ (195 aa)) folds into the tr-type G domain. A G1 region spans residues 19–26 (GHVDHGKT). 19–26 (GHVDHGKT) contributes to the GTP binding site. Position 26 (T26) interacts with Mg(2+). The interval 60–64 (GITIN) is G2. A G3 region spans residues 81 to 84 (DCPG). GTP contacts are provided by residues 81–85 (DCPGH) and 136–139 (NKCD). The segment at 136–139 (NKCD) is G4. Residues 174-176 (SAL) are G5.

Belongs to the TRAFAC class translation factor GTPase superfamily. Classic translation factor GTPase family. EF-Tu/EF-1A subfamily. As to quaternary structure, monomer.

The protein resides in the cytoplasm. The catalysed reaction is GTP + H2O = GDP + phosphate + H(+). Its function is as follows. GTP hydrolase that promotes the GTP-dependent binding of aminoacyl-tRNA to the A-site of ribosomes during protein biosynthesis. This chain is Elongation factor Tu, found in Mycoplasma capricolum subsp. capricolum (strain California kid / ATCC 27343 / NCTC 10154).